We begin with the raw amino-acid sequence, 622 residues long: Membrane protein insertase YidC (622 aa).

Residues 6 to 26 (FIAVVLSVLVLVGASFLQELL) form a helical membrane-spanning segment. The disordered stretch occupies residues 37–71 (AEHTLSAVPEETRTQSAHGGAADTQETTQPAAHPS). A run of 4 helical transmembrane segments spans residues 413–433 (LIPN…VLFF), 483–503 (LSGC…YRLF), 513–533 (MFIP…TLPF), and 579–599 (VMPL…LVYW).

The protein belongs to the OXA1/ALB3/YidC family. Type 1 subfamily. In terms of assembly, interacts with the Sec translocase complex via SecD. Specifically interacts with transmembrane segments of nascent integral membrane proteins during membrane integration.

The protein resides in the cell inner membrane. Functionally, required for the insertion and/or proper folding and/or complex formation of integral membrane proteins into the membrane. Involved in integration of membrane proteins that insert both dependently and independently of the Sec translocase complex, as well as at least some lipoproteins. Aids folding of multispanning membrane proteins. This chain is Membrane protein insertase YidC, found in Treponema pallidum (strain Nichols).